The following is a 390-amino-acid chain: Substance-K receptor (390 aa).

The Extracellular portion of the chain corresponds to 1–32 (MGTRAIVSDANILSGLESNATGVTAFSMPGWQ). Residue N19 is glycosylated (N-linked (GlcNAc...) asparagine). The helical transmembrane segment at 33 to 56 (LALWATAYLALVLVAVTGNATVIW) threads the bilayer. The Cytoplasmic portion of the chain corresponds to 57-69 (IILAHERMRTVTN). The helical transmembrane segment at 70–90 (YFIINLALADLCMAAFNATFN) threads the bilayer. Residues 91 to 107 (FIYASHNIWYFGRAFCY) lie on the Extracellular side of the membrane. An intrachain disulfide couples C106 to C181. The helical transmembrane segment at 108-129 (FQNLFPITAMFVSIYSMTAIAA) threads the bilayer. Topologically, residues 130 to 149 (DRYMAIVHPFQPRLSAPSTK) are cytoplasmic. The helical transmembrane segment at 150-170 (AIIAGIWLVALALASPQCFYS) threads the bilayer. The Extracellular portion of the chain corresponds to 171–196 (TITVDEGATKCVVAWPNDNGGKMLLL). Residues 197 to 218 (YHLVVFVLIYFLPLLVMFGAYS) form a helical membrane-spanning segment. The Cytoplasmic segment spans residues 219–251 (VIGLTLWKRAVPRHQAHGANLRHLQAKKKFVKA). Residues 252–272 (MVLVVLTFAICWLPYHLYFIL) traverse the membrane as a helical segment. Over 273-290 (GTFQEDIYYHKFIQQVYL) the chain is Extracellular. Residues 291 to 310 (ALFWLAMSSTMYNPIIYCCL) form a helical membrane-spanning segment. At 311 to 390 (NHRFRSGFRL…PAGPICKAQA (80 aa)) the chain is on the cytoplasmic side. C324 is lipidated: S-palmitoyl cysteine. A disordered region spans residues 365–390 (HSEATNGQVGSPQDGEPAGPICKAQA). A compositionally biased stretch (polar residues) spans 366–375 (SEATNGQVGS).

It belongs to the G-protein coupled receptor 1 family.

The protein resides in the cell membrane. Its function is as follows. This is a receptor for the tachykinin neuropeptide substance K (neurokinin A). It is associated with G proteins that activate a phosphatidylinositol-calcium second messenger system. The rank order of affinity of this receptor to tachykinins is: substance K &gt; neuromedin-K &gt; substance P. This Rattus norvegicus (Rat) protein is Substance-K receptor (Tacr2).